The primary structure comprises 70 residues: U-scoloptoxin(04)-Er3a (70 aa).

A signal peptide spans 1 to 24 (MAAIRNLLILTMLLIVCVSWNADA).

This sequence belongs to the scoloptoxin-04 family. In terms of processing, contains 2 disulfide bonds. In terms of tissue distribution, expressed by the venom gland.

It localises to the secreted. This Ethmostigmus rubripes (Giant centipede) protein is U-scoloptoxin(04)-Er3a.